A 1001-amino-acid polypeptide reads, in one-letter code: Ribonuclease E/G-like protein, chloroplastic (1001 aa).

A chloroplast-targeting transit peptide spans 1 to 48; the sequence is MDVTEVPWRRLPQFSVSSRASWLVSSGFPLSSYMFSHVERGKTFRLTL. The CBM20 domain occupies 76 to 185; that stretch reads SRLKGLCEVV…KIIIRDSWMS (110 aa). D755 lines the Mg(2+) pocket. Residues 769 to 789 are a coiled coil; sequence QEKAILEVNLAAARQIAREIR. D800 is a Mg(2+) binding site. Residues C858 and C861 each contribute to the Zn(2+) site.

This sequence belongs to the RNase E/G family. In terms of assembly, part of a chloroplastic degradosome-like complex. Interacts with RHON1. A homotetramer formed by a dimer of dimers. The cofactor is Mg(2+). Zn(2+) serves as cofactor. In terms of tissue distribution, expressed in cotyledons, rosette and cauline leaves.

Its subcellular location is the plastid. It is found in the chloroplast stroma. Functionally, involved in intercistronic processing of primary transcripts from chloroplast operons. The endonucleolytic activity of the enzyme depends on the number of phosphates at the 5' end, is inhibited by structured RNA, and preferentially cleaves A/U-rich sequences. This Arabidopsis thaliana (Mouse-ear cress) protein is Ribonuclease E/G-like protein, chloroplastic (RNE).